Consider the following 85-residue polypeptide: Actobindin homolog (85 aa).

The WH2 domain maps to 35 to 52 (DRNELLSGIKEGKELKKA).

In terms of biological role, is able to bind two actin monomers at high concentrations of G-actin. This chain is Actobindin homolog, found in Entamoeba histolytica.